The sequence spans 445 residues: Probable carboxypeptidase UREG_07869 (445 aa).

The N-terminal stretch at 1–17 (MKSLILTTLALLPLVSC) is a signal peptide. A Zn(2+)-binding site is contributed by Asp165. The Proton acceptor role is filled by Glu197. Position 198 (Glu198) interacts with Zn(2+).

The protein belongs to the peptidase M20A family. Zn(2+) is required as a cofactor.

Its subcellular location is the secreted. This Uncinocarpus reesii (strain UAMH 1704) protein is Probable carboxypeptidase UREG_07869.